The primary structure comprises 181 residues: RNA pyrophosphohydrolase (181 aa).

The region spanning 6 to 148 (GFRPNVGIIV…KRQVYRQALQ (143 aa)) is the Nudix hydrolase domain. The short motif at 38–59 (GGVEANETPLEALYRELREEVG) is the Nudix box element.

Belongs to the Nudix hydrolase family. RppH subfamily. The cofactor is a divalent metal cation.

Functionally, accelerates the degradation of transcripts by removing pyrophosphate from the 5'-end of triphosphorylated RNA, leading to a more labile monophosphorylated state that can stimulate subsequent ribonuclease cleavage. This chain is RNA pyrophosphohydrolase, found in Halorhodospira halophila (strain DSM 244 / SL1) (Ectothiorhodospira halophila (strain DSM 244 / SL1)).